A 233-amino-acid polypeptide reads, in one-letter code: Small ribosomal subunit protein uS3 (233 aa).

A KH type-2 domain is found at 39–107 (VREFLKAKLK…PVHVNIEEVR (69 aa)). Residues 209–233 (PGQVSAEPTQPEKKMRKGGRNAAAN) form a disordered region.

This sequence belongs to the universal ribosomal protein uS3 family. As to quaternary structure, part of the 30S ribosomal subunit. Forms a tight complex with proteins S10 and S14.

Functionally, binds the lower part of the 30S subunit head. Binds mRNA in the 70S ribosome, positioning it for translation. The sequence is that of Small ribosomal subunit protein uS3 from Laribacter hongkongensis (strain HLHK9).